The primary structure comprises 465 residues: Lactaldehyde dehydrogenase (465 aa).

220–225 contacts NAD(+); sequence GSVEVG. Active-site residues include Glu-240 and Cys-274.

This sequence belongs to the aldehyde dehydrogenase family. Homotetramer.

The enzyme catalyses (S)-lactaldehyde + NAD(+) + H2O = (S)-lactate + NADH + 2 H(+). Its pathway is cofactor biosynthesis; coenzyme F420 biosynthesis. In terms of biological role, involved in F420 biosynthesis through the oxidation of lactaldehyde to lactate. This is Lactaldehyde dehydrogenase from Methanococcus maripaludis (strain C5 / ATCC BAA-1333).